Consider the following 433-residue polypeptide: D-amino acid dehydrogenase (433 aa).

3-17 contributes to the FAD binding site; sequence VLVLGSGVIGTTSAY.

Belongs to the DadA oxidoreductase family. Requires FAD as cofactor.

The catalysed reaction is a D-alpha-amino acid + A + H2O = a 2-oxocarboxylate + AH2 + NH4(+). The protein operates within amino-acid degradation; D-alanine degradation; NH(3) and pyruvate from D-alanine: step 1/1. Its function is as follows. Oxidative deamination of D-amino acids. The polypeptide is D-amino acid dehydrogenase (Pseudomonas syringae pv. syringae (strain B728a)).